We begin with the raw amino-acid sequence, 687 residues long: Glycine--tRNA ligase beta subunit (687 aa).

Belongs to the class-II aminoacyl-tRNA synthetase family. In terms of assembly, tetramer of two alpha and two beta subunits.

Its subcellular location is the cytoplasm. The catalysed reaction is tRNA(Gly) + glycine + ATP = glycyl-tRNA(Gly) + AMP + diphosphate. The polypeptide is Glycine--tRNA ligase beta subunit (Neisseria meningitidis serogroup C / serotype 2a (strain ATCC 700532 / DSM 15464 / FAM18)).